Here is a 232-residue protein sequence, read N- to C-terminus: Pseudaminic acid cytidylyltransferase (232 aa).

This sequence belongs to the CMP-NeuNAc synthase family. The cofactor is Mg(2+).

The enzyme catalyses pseudaminate + CTP = CMP-pseudaminate + diphosphate. In terms of biological role, catalyzes the final step in the biosynthesis of pseudaminic acid, a sialic-acid-like sugar that is used to modify flagellin. Mediates the activation of pseudaminic acid with CMP by forming CMP-pseudaminic acid. This Campylobacter jejuni subsp. jejuni serotype O:2 (strain ATCC 700819 / NCTC 11168) protein is Pseudaminic acid cytidylyltransferase (pseF).